The chain runs to 252 residues: PF03932 family protein CutC (252 aa).

The protein belongs to the CutC family.

Its subcellular location is the cytoplasm. This is PF03932 family protein CutC from Serratia proteamaculans (strain 568).